A 90-amino-acid polypeptide reads, in one-letter code: Hemoglobin subunit alpha-1 (90 aa).

The Globin domain occupies 1–90 (VLTDDDKNHV…SKLSDLHAEK (90 aa)).

This sequence belongs to the globin family. Heterotetramer of two alpha chains and two beta chains. As to expression, red blood cells.

Its function is as follows. Involved in oxygen transport from the lung to the various peripheral tissues. This is Hemoglobin subunit alpha-1 from Saara hardwickii (Indian spiny-tailed lizard).